Here is a 309-residue protein sequence, read N- to C-terminus: Ribosomal RNA small subunit methyltransferase H (309 aa).

Residues 33-35, Asp53, Phe79, Asp100, and Gln107 contribute to the S-adenosyl-L-methionine site; that span reads GGH.

Belongs to the methyltransferase superfamily. RsmH family.

The protein localises to the cytoplasm. It carries out the reaction cytidine(1402) in 16S rRNA + S-adenosyl-L-methionine = N(4)-methylcytidine(1402) in 16S rRNA + S-adenosyl-L-homocysteine + H(+). Its function is as follows. Specifically methylates the N4 position of cytidine in position 1402 (C1402) of 16S rRNA. In Clostridium kluyveri (strain NBRC 12016), this protein is Ribosomal RNA small subunit methyltransferase H.